The primary structure comprises 226 residues: 6-deoxy-6-sulfo-D-fructose transaldolase (226 aa).

Lysine 89 functions as the Schiff-base intermediate with substrate in the catalytic mechanism.

The protein belongs to the transaldolase family.

It catalyses the reaction 6-deoxy-6-sulfo-D-fructose + D-glyceraldehyde 3-phosphate = D-fructose 6-phosphate + (2S)-3-sulfolactaldehyde. The enzyme catalyses 6-deoxy-6-sulfo-D-fructose + D-erythrose 4-phosphate = (2S)-3-sulfolactaldehyde + D-sedoheptulose 7-phosphate. Its function is as follows. Part of the sulfo-TAL (or sulfo-SFT) pathway, a D-sulfoquinovose degradation pathway that produces sulfolactate (SL). Catalyzes the conversion of 6-deoxy-6-sulfo-D-fructose (SF) and glyceraldehyde 3-phosphate (GAP) into fructose-6-phosphate (F6P) and 3-sulfolactaldehyde (SLA). Can also catalyze the SF-cleavage with erythrose 4-phosphate (E4P) as acceptor, forming 3-sulfolactaldehyde (SLA) and sedoheptulose 7-phosphate (S7P). This is 6-deoxy-6-sulfo-D-fructose transaldolase from Priestia aryabhattai (Bacillus aryabhattai).